Here is a 111-residue protein sequence, read N- to C-terminus: Nucleoid-associated protein PputGB1_3833 (111 aa).

2 disordered regions span residues 1 to 25 (MMKG…KMQE) and 87 to 111 (EQSS…KMPF).

This sequence belongs to the YbaB/EbfC family. As to quaternary structure, homodimer.

The protein localises to the cytoplasm. It is found in the nucleoid. Binds to DNA and alters its conformation. May be involved in regulation of gene expression, nucleoid organization and DNA protection. The protein is Nucleoid-associated protein PputGB1_3833 of Pseudomonas putida (strain GB-1).